Reading from the N-terminus, the 169-residue chain is Vimentin-type intermediate filament-associated coiled-coil protein (169 aa).

A coiled-coil region spans residues 7-89 (LQIREANAHL…VHSLQATVHQ (83 aa)). Residues 126 to 135 (RLGPLPASDP) are compositionally biased toward low complexity. Positions 126 to 169 (RLGPLPASDPGHPPPGGPGPPLDNSTGEEADRDHLQPAVFGTTV) are disordered. The segment covering 136–146 (GHPPPGGPGPP) has biased composition (pro residues).

The protein localises to the cytoplasm. The protein is Vimentin-type intermediate filament-associated coiled-coil protein (VMAC) of Homo sapiens (Human).